Reading from the N-terminus, the 1556-residue chain is MTDKESEQCTVSVFDQTPGSEQKKINVVVRSHFTVKRVIDLIGTQFSYEKFELLLQPHDNKDLVNLNALESQLMYEVAGFEPQLKNHLILLPSGSWDGDVTKRFELPIKRVVVKKVMKSDGEKAKSPATGEKKKRVVGEKTKKKPASGSSSPSKAKTTSEDSLAKTSISSESSPEKTSKIKTTAAKISKPGSEKAPRASPEECPELSTEINSKNTSSESPVAKKTAKVTSKPTLELLSPIKPSSPIKELDCEPVDTLSKQQLSEQLQLYPQGRNLISPVDDAPSDLFISDAEQLSDDDLALGASASPTMLGPGYDYGAPTGDSDVEGVTGVTDPSTIGTDDGTYPALSNFYRRKYGGDELRAWQRVNTTGADFVSSATTETEAEARQASLGPRGYVGLVNQAMTCYLNSLLQALFMTPEFRNALYRWEFDNDNEAKNIPYQLQKLFLNLQTSPKAAVETTDLTRSFGWDSTEAWQQHDIQELCRVMFDALEHKFKNTKQANLISNLYEGKMNDYVKCLECNTEKTREDTFLDIPLPVRPFGSSSAYGSIEEALRAFVQPETLDGNNQYLCEKCKKKCDAHKGLHFKSFPYILTLHLKRFDFDYQTMHRIKLNDRVTFPQTLNLNTFINRSGNSGEQNSQLNGTVDDCSTADSGSAMEDDNLSSGVVTTASSSQHENDLNDEDEGIDMSSSTSKSAKQGSGPYLYELFAIMIHSGSASGGHYYAYIKDFDNNEWFCFNDQNVTSITQEDIQRSFGGPNGSYYSSAYTSSTNAYMLMYRQVDAKRNELVAKVADFPEHIKTLLPKLHSEEETRVSRLGRHITVTDLALPDLYKPRVYFYNPSLKKMKITRVYVSQSFNINLVLMSAYEMLNVEQFAPLSRCRLVAYNSSMDTIIQSLESCTDPALTELRAAQNYSLDFLLEYRAEDQEFEVYPPNGITWYVFKVDLSTMAMDGPFLVYSAAREREASDVLRRSIALRLHISEQQFLLATVRATVPKAFVSYDPHPTPEALQHLQNMANTQFKSITYFYLNVPNTDAATLEMLGVPTVESVECASGGDVVDAAMMNGVAPGHMSSSNDYDWRRYKRDLVEPMSQPSPSHGHESNSEDSSLSDGDRTLVETDNMAHRGGGDSQVSSTSHSPQLSSPEDEAASHDAMMRVHAYCNGNGSYAAADVVDPLLLPTSTNHFFYATKVECVDVVGTGSSSGHQSDEEAQLRKPTRAYKLLVGTHMRMGAFKKHIEQLIQVPAAHFKLQRKHDNNLSNNQNNSLVHLIEGETLTVELGKTLEPDEFKAKIHFLRLADIDNETSKLPCVCEWVYNANTTAEQAKKELVAKLHRIDAKYATLSVQNCRIWLKGGRIPIKILSDDETLYCDMRSSIAAEFIVQECEEEVDPQPKDDSLTLFVRRWCPAKLEFGKFQEITLDQDSEIRLSLSQISDIPIDKLSYMKLNSNFPCTSISALSVNESSSWYSVPTTLDKYPLNSTQTGNIYLYKDRTVPARELTLEERRLMNAREKARLDRVGCVSTTRYAQRRERALKIYLDSPEKSSNVTASAPMDVHVNN.

Positions 117–231 are disordered; it reads MKSDGEKAKS…AKKTAKVTSK (115 aa). A compositionally biased stretch (low complexity) spans 146 to 156; that stretch reads ASGSSSPSKAK. 2 positions are modified to phosphoserine: S172 and S173. The segment covering 180–189 has biased composition (low complexity); it reads IKTTAAKISK. Over residues 191–200 the composition is skewed to basic and acidic residues; that stretch reads GSEKAPRASP. Residues 208–219 show a composition bias toward polar residues; the sequence is TEINSKNTSSES. A Phosphoserine modification is found at S238. In terms of domain architecture, USP spans 396 to 779; that stretch reads VGLVNQAMTC…NAYMLMYRQV (384 aa). C405 serves as the catalytic Nucleophile. 2 stretches are compositionally biased toward polar residues: residues 628–642 and 661–673; these read NRSG…QLNG and LSSG…SSSQ. The disordered stretch occupies residues 628 to 697; that stretch reads NRSGNSGEQN…SSSTSKSAKQ (70 aa). The segment covering 688 to 697 has biased composition (low complexity); the sequence is SSSTSKSAKQ. The Proton acceptor role is filled by H720. Positions 1087–1148 are disordered; that stretch reads EPMSQPSPSH…LSSPEDEAAS (62 aa). Residues 1109–1125 show a composition bias toward basic and acidic residues; it reads DGDRTLVETDNMAHRGG. Residues 1128–1141 are compositionally biased toward low complexity; sequence SQVSSTSHSPQLSS. Residues S1131, S1132, S1140, S1141, S1199, S1201, and S1205 each carry the phosphoserine modification.

The protein belongs to the peptidase C19 family. Interacts with ttk.

It is found in the nucleus. The catalysed reaction is Thiol-dependent hydrolysis of ester, thioester, amide, peptide and isopeptide bonds formed by the C-terminal Gly of ubiquitin (a 76-residue protein attached to proteins as an intracellular targeting signal).. Its function is as follows. Ubiquitin-specific protease that deubiquitinates target proteins to regulate different cellular and developmental pathways. Functions downstream of Dsor1/MEK to positively regulate the Ras/MAPK signaling pathway. Likely to modulate the pathway during various cellular and developmental processes including rl/MAPK activation by the receptors InR, Egfr and sevenless/sev. Functions in the post-translational stabilization of rl/MAPK levels in a mechanism that is independent of rl activity and opposes the activity of the E2 enzyme Unc6 and the putative E3 ligases poe, Ufd4 and Kcmf1, which mediate the ubiquitination and proteasomal degradation of rl. During eye development it may also act downstream of rl/MAPK to negatively regulate the Ras/MAPK signaling pathway by stabilizing the transcriptional repressor ttk and consequently inhibiting photoreceptor cell development. This suggests that at least during eye development, it may act in both the positive and negative regulation of the Ras/MAPK signaling pathway to mediate the development of different cell types. Positively regulates border follicle cell migration during oogenesis by mediating the deubiquitination and stabilization of slbo. In the wing disks it positively regulates wg signaling by stabilizing arm. Has an effect on position-effect variegation. The protein is Ubiquitin carboxyl-terminal hydrolase 47 of Drosophila melanogaster (Fruit fly).